The chain runs to 336 residues: 4-hydroxy-3-methylbut-2-enyl diphosphate reductase (336 aa).

Cys32 contributes to the [4Fe-4S] cluster binding site. His61 and His94 together coordinate (2E)-4-hydroxy-3-methylbut-2-enyl diphosphate. Positions 61 and 94 each coordinate dimethylallyl diphosphate. 2 residues coordinate isopentenyl diphosphate: His61 and His94. Cys116 contacts [4Fe-4S] cluster. His148 contacts (2E)-4-hydroxy-3-methylbut-2-enyl diphosphate. His148 contributes to the dimethylallyl diphosphate binding site. Isopentenyl diphosphate is bound at residue His148. The Proton donor role is filled by Glu150. Residue Thr189 coordinates (2E)-4-hydroxy-3-methylbut-2-enyl diphosphate. Residue Cys219 participates in [4Fe-4S] cluster binding. (2E)-4-hydroxy-3-methylbut-2-enyl diphosphate-binding residues include Ser247, Ser248, Asn249, and Ser292. Positions 247, 248, 249, and 292 each coordinate dimethylallyl diphosphate. Ser247, Ser248, Asn249, and Ser292 together coordinate isopentenyl diphosphate.

Belongs to the IspH family. [4Fe-4S] cluster serves as cofactor.

It carries out the reaction isopentenyl diphosphate + 2 oxidized [2Fe-2S]-[ferredoxin] + H2O = (2E)-4-hydroxy-3-methylbut-2-enyl diphosphate + 2 reduced [2Fe-2S]-[ferredoxin] + 2 H(+). The catalysed reaction is dimethylallyl diphosphate + 2 oxidized [2Fe-2S]-[ferredoxin] + H2O = (2E)-4-hydroxy-3-methylbut-2-enyl diphosphate + 2 reduced [2Fe-2S]-[ferredoxin] + 2 H(+). It functions in the pathway isoprenoid biosynthesis; dimethylallyl diphosphate biosynthesis; dimethylallyl diphosphate from (2E)-4-hydroxy-3-methylbutenyl diphosphate: step 1/1. Its pathway is isoprenoid biosynthesis; isopentenyl diphosphate biosynthesis via DXP pathway; isopentenyl diphosphate from 1-deoxy-D-xylulose 5-phosphate: step 6/6. Catalyzes the conversion of 1-hydroxy-2-methyl-2-(E)-butenyl 4-diphosphate (HMBPP) into a mixture of isopentenyl diphosphate (IPP) and dimethylallyl diphosphate (DMAPP). Acts in the terminal step of the DOXP/MEP pathway for isoprenoid precursor biosynthesis. The chain is 4-hydroxy-3-methylbut-2-enyl diphosphate reductase from Gluconobacter oxydans (strain 621H) (Gluconobacter suboxydans).